Reading from the N-terminus, the 211-residue chain is MSKFQVVEHPLIQHKLSILRRKEASTKEFRELVDEIGMLMAYEVSRDLPLEDVEIETPVQKTTVKQIAGKKLAIVPILRAGIGMVDGILKLIPAARVGHIGMYRDEETLKPVEYLVKLPADIADRQIFLVDPMLATGGSAILAVDSLKKRNAKAENIKFVCLVAAPEGVKALQKAHPDIEIYTAALDEKLNEHGYIVPGLGDAGDRLFGTK.

5-phospho-alpha-D-ribose 1-diphosphate is bound by residues Arg79, Arg104, and 131–139; that span reads DPMLATGGS. Residues Ile196 and 201 to 203 each bind uracil; that span reads GDA. A 5-phospho-alpha-D-ribose 1-diphosphate-binding site is contributed by Asp202.

Belongs to the UPRTase family. Requires Mg(2+) as cofactor.

The catalysed reaction is UMP + diphosphate = 5-phospho-alpha-D-ribose 1-diphosphate + uracil. Its pathway is pyrimidine metabolism; UMP biosynthesis via salvage pathway; UMP from uracil: step 1/1. With respect to regulation, allosterically activated by GTP. Catalyzes the conversion of uracil and 5-phospho-alpha-D-ribose 1-diphosphate (PRPP) to UMP and diphosphate. The protein is Uracil phosphoribosyltransferase of Lactococcus lactis subsp. lactis (strain IL1403) (Streptococcus lactis).